The chain runs to 285 residues: Nudix hydrolase 15, mitochondrial (285 aa).

Residues M1 to S23 constitute a mitochondrion transit peptide. M24 bears the N-acetylmethionine mark. 2 disordered regions span residues R51–E72 and T129–A152. A Nudix hydrolase domain is found at P99–T255. The short motif at K140–G161 is the Nudix box element. Residues E155 and E159 each contribute to the Mg(2+) site.

This sequence belongs to the Nudix hydrolase family. Mg(2+) serves as cofactor. It depends on Mn(2+) as a cofactor. In terms of tissue distribution, expressed in roots, leaves, stems and inflorescences.

The protein localises to the mitochondrion. In terms of biological role, coenzyme A diphosphatase which mediates the cleavage of oxidized CoA. Can use malonyl-CoA, hexanoyl-CoA, lauroyl-CoA, myristoyl-CoA and palmitoyl-CoA as substrates, but not isobutyryl-CoA or propionyl-CoA. The sequence is that of Nudix hydrolase 15, mitochondrial (NUDT15) from Arabidopsis thaliana (Mouse-ear cress).